The sequence spans 319 residues: 4-hydroxy-3-methylbut-2-enyl diphosphate reductase (319 aa).

C17 serves as a coordination point for [4Fe-4S] cluster. Residues H46 and H79 each coordinate (2E)-4-hydroxy-3-methylbut-2-enyl diphosphate. Dimethylallyl diphosphate-binding residues include H46 and H79. Isopentenyl diphosphate is bound by residues H46 and H79. C101 is a binding site for [4Fe-4S] cluster. Residue H129 participates in (2E)-4-hydroxy-3-methylbut-2-enyl diphosphate binding. Dimethylallyl diphosphate is bound at residue H129. H129 provides a ligand contact to isopentenyl diphosphate. E131 serves as the catalytic Proton donor. A (2E)-4-hydroxy-3-methylbut-2-enyl diphosphate-binding site is contributed by T170. C200 lines the [4Fe-4S] cluster pocket. 4 residues coordinate (2E)-4-hydroxy-3-methylbut-2-enyl diphosphate: S228, S229, N230, and S273. Residues S228, S229, N230, and S273 each contribute to the dimethylallyl diphosphate site. Isopentenyl diphosphate contacts are provided by S228, S229, N230, and S273.

The protein belongs to the IspH family. [4Fe-4S] cluster is required as a cofactor.

The catalysed reaction is isopentenyl diphosphate + 2 oxidized [2Fe-2S]-[ferredoxin] + H2O = (2E)-4-hydroxy-3-methylbut-2-enyl diphosphate + 2 reduced [2Fe-2S]-[ferredoxin] + 2 H(+). It carries out the reaction dimethylallyl diphosphate + 2 oxidized [2Fe-2S]-[ferredoxin] + H2O = (2E)-4-hydroxy-3-methylbut-2-enyl diphosphate + 2 reduced [2Fe-2S]-[ferredoxin] + 2 H(+). It participates in isoprenoid biosynthesis; dimethylallyl diphosphate biosynthesis; dimethylallyl diphosphate from (2E)-4-hydroxy-3-methylbutenyl diphosphate: step 1/1. It functions in the pathway isoprenoid biosynthesis; isopentenyl diphosphate biosynthesis via DXP pathway; isopentenyl diphosphate from 1-deoxy-D-xylulose 5-phosphate: step 6/6. Its function is as follows. Catalyzes the conversion of 1-hydroxy-2-methyl-2-(E)-butenyl 4-diphosphate (HMBPP) into a mixture of isopentenyl diphosphate (IPP) and dimethylallyl diphosphate (DMAPP). Acts in the terminal step of the DOXP/MEP pathway for isoprenoid precursor biosynthesis. This chain is 4-hydroxy-3-methylbut-2-enyl diphosphate reductase, found in Cereibacter sphaeroides (strain ATCC 17025 / ATH 2.4.3) (Rhodobacter sphaeroides).